The primary structure comprises 308 residues: tRNA-cytidine(32) 2-sulfurtransferase (308 aa).

Residues 39–44 (SGGKDS) carry the PP-loop motif motif. The [4Fe-4S] cluster site is built by cysteine 114, cysteine 117, and cysteine 205.

This sequence belongs to the TtcA family. As to quaternary structure, homodimer. It depends on Mg(2+) as a cofactor. Requires [4Fe-4S] cluster as cofactor.

Its subcellular location is the cytoplasm. It catalyses the reaction cytidine(32) in tRNA + S-sulfanyl-L-cysteinyl-[cysteine desulfurase] + AH2 + ATP = 2-thiocytidine(32) in tRNA + L-cysteinyl-[cysteine desulfurase] + A + AMP + diphosphate + H(+). It participates in tRNA modification. In terms of biological role, catalyzes the ATP-dependent 2-thiolation of cytidine in position 32 of tRNA, to form 2-thiocytidine (s(2)C32). The sulfur atoms are provided by the cysteine/cysteine desulfurase (IscS) system. The sequence is that of tRNA-cytidine(32) 2-sulfurtransferase from Cupriavidus taiwanensis (strain DSM 17343 / BCRC 17206 / CCUG 44338 / CIP 107171 / LMG 19424 / R1) (Ralstonia taiwanensis (strain LMG 19424)).